The following is an 849-amino-acid chain: G-type lectin S-receptor-like serine/threonine-protein kinase At4g11900 (849 aa).

A signal peptide spans 1 to 26; it reads MQICKKNVFLLYYGVLVFLSFQVSSS. The 154-residue stretch at 27–180 folds into the Bulb-type lectin domain; it reads TDTISTNQPL…PNSSAAVLWQ (154 aa). Topologically, residues 27–466 are extracellular; sequence TDTISTNQPL…RKTEHSKGKS (440 aa). Residues asparagine 111, asparagine 148, asparagine 172, and asparagine 232 are each glycosylated (N-linked (GlcNAc...) asparagine). In terms of domain architecture, EGF-like spans 311-348; sequence PDNRCDVYNSCGSFGICNENREPPPCRCVPGFKREFSQ. Intrachain disulfides connect cysteine 315/cysteine 327, cysteine 321/cysteine 336, cysteine 401/cysteine 421, and cysteine 405/cysteine 411. The region spanning 368–447 is the PAN domain; sequence CYKRNDEFLP…KGHTFFLRLA (80 aa). An N-linked (GlcNAc...) asparagine glycan is attached at asparagine 450. The helical transmembrane segment at 467–487 threads the bilayer; it reads IVLPLVLASLVATAACFVGLY. The Cytoplasmic portion of the chain corresponds to 488 to 849; sequence CCISSRIRRK…EATQTELEAR (362 aa). The 286-residue stretch at 537 to 822 folds into the Protein kinase domain; it reads FSRKKKLGEG…TLPIPKQPTF (286 aa). Residues 543–551 and lysine 565 each bind ATP; that span reads LGEGGFGPV. Serine 571 bears the Phosphoserine mark. The interval 626–643 is caM-binding; sequence LKSRELDWETRMKIVNGT. The active-site Proton acceptor is the aspartate 662. Phosphoserine occurs at positions 666 and 679. The residue at position 696 (threonine 696) is a Phosphothreonine. Serine 837 carries the phosphoserine modification. Threonine 844 bears the Phosphothreonine mark.

This sequence belongs to the protein kinase superfamily. Ser/Thr protein kinase family.

The protein resides in the cell membrane. It carries out the reaction L-seryl-[protein] + ATP = O-phospho-L-seryl-[protein] + ADP + H(+). The enzyme catalyses L-threonyl-[protein] + ATP = O-phospho-L-threonyl-[protein] + ADP + H(+). This chain is G-type lectin S-receptor-like serine/threonine-protein kinase At4g11900, found in Arabidopsis thaliana (Mouse-ear cress).